A 196-amino-acid chain; its full sequence is Superoxide dismutase [Fe] (196 aa).

The Fe cation site is built by His20, His68, Asp157, and His161.

This sequence belongs to the iron/manganese superoxide dismutase family. In terms of assembly, homotetramer. It depends on Fe cation as a cofactor.

It carries out the reaction 2 superoxide + 2 H(+) = H2O2 + O2. Functionally, destroys superoxide anion radicals which are normally produced within the cells and which are toxic to biological systems. The chain is Superoxide dismutase [Fe] from Tetrahymena pyriformis.